A 659-amino-acid chain; its full sequence is Threonine--tRNA ligase (659 aa).

Residues 7 to 70 (DSELIKLTLP…QQDGAIEIVT (64 aa)) enclose the TGS domain. The catalytic stretch occupies residues 253–555 (DHRKLGSELE…LIENFAGNFP (303 aa)). Zn(2+) is bound by residues Cys-351, His-402, and His-532.

Belongs to the class-II aminoacyl-tRNA synthetase family. Homodimer. Zn(2+) serves as cofactor.

The protein localises to the cytoplasm. It carries out the reaction tRNA(Thr) + L-threonine + ATP = L-threonyl-tRNA(Thr) + AMP + diphosphate + H(+). Catalyzes the attachment of threonine to tRNA(Thr) in a two-step reaction: L-threonine is first activated by ATP to form Thr-AMP and then transferred to the acceptor end of tRNA(Thr). Also edits incorrectly charged L-seryl-tRNA(Thr). The polypeptide is Threonine--tRNA ligase (Chloroherpeton thalassium (strain ATCC 35110 / GB-78)).